The sequence spans 96 residues: Exopolysaccharide production repressor protein (96 aa).

The next 2 membrane-spanning stretches (helical) occupy residues 6 to 26 and 35 to 55; these read FVVS…FLTG and TLLC…FLVW. The interval 64-96 is disordered; the sequence is LSPGQLPADPTNDEKQTGKLSLRRLNRPPHFNS.

Its subcellular location is the cell membrane. It participates in glycan metabolism; exopolysaccharide biosynthesis. Its function is as follows. Inhibition of exopolysaccharide synthesis (EPS) and nodulation ability (NOD). This is Exopolysaccharide production repressor protein (exoX) from Sinorhizobium fredii (strain NBRC 101917 / NGR234).